The following is a 181-amino-acid chain: Putative manganese efflux pump MntP (181 aa).

The next 6 membrane-spanning stretches (helical) occupy residues 5 to 25 (LIAL…IALG), 36 to 56 (MFKV…MGMV), 66 to 86 (GLFA…VMIV), 102 to 122 (IGLF…GLSL), 130 to 150 (ALAV…GLFI), and 158 to 178 (VGPY…VKLL).

The protein belongs to the MntP (TC 9.B.29) family.

Its subcellular location is the cell membrane. Functionally, probably functions as a manganese efflux pump. In Halalkalibacterium halodurans (strain ATCC BAA-125 / DSM 18197 / FERM 7344 / JCM 9153 / C-125) (Bacillus halodurans), this protein is Putative manganese efflux pump MntP.